The chain runs to 4836 residues: E3 ubiquitin-protein ligase HERC2 (4836 aa).

Residues 58-90 (LPLRKDDGVDAQSGTKKEDLNDKEKKEEEETPA) form a disordered region. Over residues 72 to 85 (TKKEDLNDKEKKEE) the composition is skewed to basic and acidic residues. Position 273 is a phosphothreonine (T273). The RCC1 1-1 repeat unit spans residues 416 to 462 (PTSHKGSLQEVIGWGLIGWKYYANVIGPIQCEGLASLGVMQVACAEK). One copy of the RCC1 1-2 repeat lies at 463–513 (RFLILSRNGRVYTQAYNSDMLAPQLVQGLASRNIVKIAAHSDGHHYLALAA). The stretch at 514 to 569 (TGEVYSWGCGDGGRLGHGDTVPLEEPKVISAFSGKQAGKHVVHIACGSTYSAAITA) is one RCC1 1-3 repeat. An RCC1 1-4 repeat occupies 570 to 621 (EGELYTWGRGNYGRLGHGSSEDEAIPMLVAGLKGLKVIDVACGSGDAQTLAV). Residues 624 to 675 (NGQVWSWGDGDYGKLGRGGSDGCKTPKLIEKLQDLDVIKVRCGSQFSIALTK) form an RCC1 1-5 repeat. The residue at position 648 (T648) is a Phosphothreonine. One copy of the RCC1 1-6 repeat lies at 676 to 727 (DGQVYSWGKGDNQRLGHGTEEHVRYPKLLEGLQGKKVIDVAAGSTHCLALTE). One copy of the RCC1 1-7 repeat lies at 729-779 (SEVHSWGSNDQCQHFDTLRVTKPEPTALPGLDSKHIVGIACGPAQSFAWSS). Residues 948–981 (ALNAAITAEIQDIEAKKEAQKEKEIDEQEASAST) adopt a coiled-coil conformation. A Cytochrome b5 heme-binding domain is found at 1208–1284 (VTLIRKADLE…MHAFCVGQYL (77 aa)). S1578 is subject to Phosphoserine. Residues 1860-1933 (SGPELAAMMK…KYDLKLVELP (74 aa)) form the MIB/HERC2 domain. S1943 bears the Phosphoserine mark. T1945 carries the phosphothreonine modification. Positions 2351–2376 (GTGTLQTDDGAAASPDLGDMSPEGPQ) are disordered. The residue at position 2455 (S2455) is a Phosphoserine. In terms of domain architecture, CPH spans 2555–2631 (RADFLSNDDY…RYIHVELIGY (77 aa)). The ZZ-type zinc-finger motif lies at 2704-2756 (HPGVTCDGCQTFPINGSRFKCRNCDDFDFCETCFKTKKHNTRHTFGRINEPGQ). Residues C2709, C2712, C2724, C2727, C2733, C2736, H2742, and H2746 each contribute to the Zn(2+) site. The DOC domain occupies 2760 to 2937 (FCGRSGKQLK…ASDNEEEEDD (178 aa)). Positions 2928 to 2947 (ASDNEEEEDDKGSTGSLIRK) are disordered. Phosphoserine is present on S2929. An RCC1 2-1 repeat occupies 2959-3010 (RTKVFVWGLNDKDQLGGLKGSKIKVPSFSETLSALNVVQVAGGSKSLFAVTV). An RCC1 2-2 repeat occupies 3011–3065 (EGKVYSCGEATNGRLGLGMSSGTVPIPRQITALSSYVVKKVAVHSGGRHATALTV). One copy of the RCC1 2-3 repeat lies at 3066–3117 (DGKVFSWGEGDDGKLGHFSRMNCDKPRLIEALKTKRIRDIACGSSHSAALTS). One copy of the RCC1 2-4 repeat lies at 3119-3169 (GELYTWGLGEYGRLGHGDNTTQLKPKMVKVLLGHRVIQVACGSRDAQTLAL). The RCC1 2-5 repeat unit spans residues 3172–3223 (EGLVFSWGDGDFGKLGRGGSEGCNIPQNIERLNGQGVCQIECGAQFSLALTK). The RCC1 2-6 repeat unit spans residues 3225–3275 (GVVWTWGKGDYFRLGHGSDVHVRKPQVVEGLRGKKIVHVAVGALHCLAVTD). Residues 3276 to 3327 (SGQVYAWGDNDHGQQGNGTTTVNRKPTLVQGLEGQKITRVACGSSHSVAWTT) form an RCC1 2-7 repeat. Disordered stretches follow at residues 3479-3499 (DAVT…RPFI), 3517-3537 (KTKE…QSLD), and 3604-3632 (SQSG…SGTV). Residues 3480-3495 (AVTPSAVTPSAPSASS) are compositionally biased toward low complexity. Polar residues-rich tracts occupy residues 3604–3613 (SQSGRLSSQP) and 3620–3631 (HPYTDDTSTSGT). The stretch at 3953–4004 (SGTIYGWGHNHRGQLGGIEGAKVKVPTPCEALATLRPVQLIGGEQTLFAVTA) is one RCC1 3-1 repeat. Residues 4006–4058 (GKLYATGYGAGGRLGIGGTESVSTPTLLESIQHVFIKKVAVNSGGKHCLALSS) form an RCC1 3-2 repeat. An RCC1 3-3 repeat occupies 4060 to 4110 (GEVYSWGEAEDGKLGHGNRSPCDRPRVIESLRGIEVVDVAAGGAHSACVTA). An RCC1 3-4 repeat occupies 4112-4164 (GDLYTWGKGRYGRLGHSDSEDQLKPKLVEALQGHRVIDIACGSGDAQTLCLTD). One copy of the RCC1 3-5 repeat lies at 4166-4216 (DTVWSWGDGDYGKLGRGGSDGCKVPMKIDSLTGLGVVKVECGSQFSVALTK). Residues 4218–4268 (GAVYTWGKGDYHRLGHGSDDHVRRPRQVQGLQGKKVIAIATGSLHCVCCTE) form an RCC1 3-6 repeat. The stretch at 4270 to 4320 (GEVYTWGDNDEGQLGDGTTNAIQRPRLVAALQGKKVNRVACGSAHTLAWST) is one RCC1 3-7 repeat. The region spanning 4459-4796 (DSLLLPHRVW…IHFCKSIDTD (338 aa)) is the HECT domain. The active-site Glycyl thioester intermediate is C4764. A disordered region spans residues 4806-4836 (EPAADDSSEDSDNEDADSFASDSTQDYLTGH). Residues 4808-4822 (AADDSSEDSDNEDAD) are compositionally biased toward acidic residues. Phosphoserine is present on residues S4812, S4813, and S4816. Phosphothreonine is present on T4829.

In terms of assembly, interacts (when phosphorylated at Thr-4829 and sumoylated) with RNF8 (via FHA domain); this interaction increases after ionising radiation (IR) treatment. Interacts with XPA. Interacts with NEURL4. Via its interaction with NEURL4, may indirectly interact with CCP110 and CEP97. Phosphorylation at Thr-4829 is required for interaction with RNF8. In terms of processing, sumoylated with SUMO1 by PIAS4 in response to double-strand breaks (DSBs), promoting the interaction with RNF8. As to expression, highest levels are found in brain and testis with lower levels in heart, lung, liver, skeletal muscle and kidney. Little expression detected in spleen.

Its subcellular location is the cytoplasm. It is found in the cytoskeleton. The protein localises to the microtubule organizing center. The protein resides in the centrosome. It localises to the centriole. Its subcellular location is the nucleus. It catalyses the reaction S-ubiquitinyl-[E2 ubiquitin-conjugating enzyme]-L-cysteine + [acceptor protein]-L-lysine = [E2 ubiquitin-conjugating enzyme]-L-cysteine + N(6)-ubiquitinyl-[acceptor protein]-L-lysine.. It functions in the pathway protein modification; protein ubiquitination. Functionally, E3 ubiquitin-protein ligase that regulates ubiquitin-dependent retention of repair proteins on damaged chromosomes. Recruited to sites of DNA damage in response to ionizing radiation (IR) and facilitates the assembly of UBE2N and RNF8 promoting DNA damage-induced formation of 'Lys-63'-linked ubiquitin chains. Acts as a mediator of binding specificity between UBE2N and RNF8. Involved in the maintenance of RNF168 levels. E3 ubiquitin-protein ligase that promotes the ubiquitination and proteasomal degradation of XPA which influences the circadian oscillation of DNA excision repair activity. By controlling the steady-state expression of the IGF1R receptor, indirectly regulates the insulin-like growth factor receptor signaling pathway. Also modulates iron metabolism by regulating the basal turnover of FBXL5. The sequence is that of E3 ubiquitin-protein ligase HERC2 from Mus musculus (Mouse).